The following is a 275-amino-acid chain: Adaptin ear-binding coat-associated protein 1 (275 aa).

Residues 170–191 (KGGASKPRTARGGGLSLLPPPP) form a disordered region. Arg-180 carries the omega-N-methylarginine modification. Thr-211 is subject to Phosphothreonine. 2 consecutive short sequence motifs (WXXF motif) follow at residues 252-255 (WGDF) and 272-275 (WVQF). Residues 254–275 (DFSTASSSVPNQAPQPSNWVQF) form a disordered region. Residues 256–275 (STASSSVPNQAPQPSNWVQF) show a composition bias toward polar residues.

Belongs to the NECAP family. In terms of assembly, interacts with AP1G1 and AP2A1 components of the adapter protein complexes AP-1 and AP-2. Interacts with the GAE domain proteins GGA1, GGA2 and GGA3.

It is found in the cytoplasmic vesicle. Its subcellular location is the clathrin-coated vesicle membrane. The protein localises to the cell membrane. Involved in endocytosis. This Homo sapiens (Human) protein is Adaptin ear-binding coat-associated protein 1 (NECAP1).